Consider the following 457-residue polypeptide: Argininosuccinate lyase (457 aa).

Belongs to the lyase 1 family. Argininosuccinate lyase subfamily.

The protein resides in the cytoplasm. It catalyses the reaction 2-(N(omega)-L-arginino)succinate = fumarate + L-arginine. It functions in the pathway amino-acid biosynthesis; L-arginine biosynthesis; L-arginine from L-ornithine and carbamoyl phosphate: step 3/3. The chain is Argininosuccinate lyase from Psychrobacter cryohalolentis (strain ATCC BAA-1226 / DSM 17306 / VKM B-2378 / K5).